The primary structure comprises 470 residues: Transcription factor SOX-8 (470 aa).

Residues 1 to 12 are compositionally biased toward basic and acidic residues; sequence MLNMTEEHDKAL. The disordered stretch occupies residues 1-60; the sequence is MLNMTEEHDKALEAPCSPAGTTSSMSHVDSDSDSPLSPAGSEGLGCAPAPAPRPPGAAPL. Residues 67 to 107 are dimerization (DIM); that stretch reads AEVDERFPACIRDAVSQVLKGYDWSLVPMPVRGNGSLKAKP. The segment at residues 109–177 is a DNA-binding region (HMG box); the sequence is VKRPMNAFMV…QHKKDHPDYK (69 aa). 3 stretches are compositionally biased toward basic and acidic residues: residues 163–178, 219–228, and 242–257; these read ERLRVQHKKDHPDYKY, DGHHHGEHAG, and TDLHHGSKQELKHEGR. Disordered regions lie at residues 163-257 and 327-381; these read ERLR…HEGR and AGGA…DYGS. The interval 233 to 308 is transactivation domain (TAM); sequence PPTPPTTPKT…LNGHTAMPAD (76 aa). Residues 338–349 show a composition bias toward low complexity; the sequence is SPASASPSSADS. The interval 353 to 470 is transactivation domain (TAC); that stretch reads RPHIKTEQLS…QPVYTTLTRP (118 aa). A compositionally biased stretch (polar residues) spans 359–372; sequence EQLSPSHYSDQSHG. The 9aaTAD motif lies at 424–432; it reads SSIYQYPYF.

As to expression, widely expressed in the embryo.

The protein resides in the nucleus. In terms of biological role, transcription factor that may play a role in central nervous system, limb and facial development. May be involved in male sex determination. Binds the consensus motif 5'-[AT][AT]CAA[AT]G-3'. The polypeptide is Transcription factor SOX-8 (SOX8) (Gallus gallus (Chicken)).